A 313-amino-acid polypeptide reads, in one-letter code: GTP cyclohydrolase 1 (313 aa).

Basic and acidic residues predominate over residues 1–10 (MAQETTRDGS). A disordered region spans residues 1–120 (MAQETTRDGS…SRGTRERLEE (120 aa)). Residues 11 to 20 (DSPSGSVSPP) show a composition bias toward low complexity. The span at 29–39 (KDKKSSKKRAH) shows a compositional bias: basic residues. Positions 40 to 64 (SSGERRSSVSKPARDPSDKPEESPS) are enriched in basic and acidic residues. Positions 72–102 (TSSTAAAAVPSTITEEVSPSTSVTRSPSPVI) are enriched in low complexity. Positions 202, 205, and 273 each coordinate Zn(2+).

The protein belongs to the GTP cyclohydrolase I family. In terms of assembly, toroid-shaped homodecamer, composed of two pentamers of five dimers.

It carries out the reaction GTP + H2O = 7,8-dihydroneopterin 3'-triphosphate + formate + H(+). Its pathway is cofactor biosynthesis; 7,8-dihydroneopterin triphosphate biosynthesis; 7,8-dihydroneopterin triphosphate from GTP: step 1/1. With respect to regulation, GTP shows a positive allosteric effect, and tetrahydrobiopterin inhibits the enzyme activity. Its function is as follows. GTP cyclohydrolase 1 is the first enzyme in the biosynthetic pathway leading to folic acid. The protein is GTP cyclohydrolase 1 (gch-1) of Neurospora crassa (strain ATCC 24698 / 74-OR23-1A / CBS 708.71 / DSM 1257 / FGSC 987).